Here is a 309-residue protein sequence, read N- to C-terminus: Fructosamine-3-kinase (309 aa).

Position 1 is an N-acetylmethionine (Met1). 89–91 contributes to the ATP binding site; the sequence is EHL. Residue Asp217 is the Proton acceptor of the active site.

This sequence belongs to the fructosamine kinase family. In terms of assembly, monomer. Widely expressed. Expressed in erythrocytes.

It carries out the reaction N(6)-(D-fructosyl)-L-lysyl-[protein] + ATP = N(6)-(3-O-phospho-D-fructosyl)-L-lysyl-[protein] + ADP + H(+). The catalysed reaction is N(6)-D-ribulosyl-L-lysyl-[protein] + ATP = N(6)-(3-O-phospho-D-ribulosyl)-L-lysyl-[protein] + ADP + H(+). The enzyme catalyses N(6)-(D-psicosyl)-L-lysyl-[protein] + ATP = N(6)-(3-O-phospho-D-psicosyl)-L-lysyl-[protein] + ADP + H(+). Fructosamine-3-kinase involved in protein deglycation by mediating phosphorylation of fructoselysine residues on glycated proteins, to generate fructoselysine-3 phosphate. Fructoselysine-3 phosphate adducts are unstable and decompose under physiological conditions. Involved in intracellular deglycation in erythrocytes. Involved in the response to oxidative stress by mediating deglycation of NFE2L2/NRF2, glycation impairing NFE2L2/NRF2 function. Also able to phosphorylate psicosamines and ribulosamines. The sequence is that of Fructosamine-3-kinase from Homo sapiens (Human).